Here is a 339-residue protein sequence, read N- to C-terminus: Transcription initiation factor IIB (339 aa).

A TFIIB-type zinc finger spans residues 39-70; sequence EELICPVCGSKSIIKDYERAEIVCEMCGCVLQ. Residues cysteine 43, cysteine 46, cysteine 62, and cysteine 65 each coordinate Zn(2+). Tandem repeats lie at residues 156–239 and 250–331.

The protein belongs to the TFIIB family.

Functionally, stabilizes TBP binding to an archaeal box-A promoter. Also responsible for recruiting RNA polymerase II to the pre-initiation complex (DNA-TBP-TFIIB). The protein is Transcription initiation factor IIB of Methanococcus maripaludis (strain DSM 14266 / JCM 13030 / NBRC 101832 / S2 / LL).